Consider the following 207-residue polypeptide: Proteasome subunit beta (207 aa).

The propeptide at 1–9 (MSNKNTFEG) is removed in mature form; by autocatalysis. Threonine 10 serves as the catalytic Nucleophile.

This sequence belongs to the peptidase T1B family. The 20S proteasome core is composed of 14 alpha and 14 beta subunits that assemble into four stacked heptameric rings, resulting in a barrel-shaped structure. The two inner rings, each composed of seven catalytic beta subunits, are sandwiched by two outer rings, each composed of seven alpha subunits. The catalytic chamber with the active sites is on the inside of the barrel. Has a gated structure, the ends of the cylinder being occluded by the N-termini of the alpha-subunits. Is capped at one or both ends by the proteasome regulatory ATPase, PAN.

It localises to the cytoplasm. The enzyme catalyses Cleavage of peptide bonds with very broad specificity.. With respect to regulation, the formation of the proteasomal ATPase PAN-20S proteasome complex, via the docking of the C-termini of PAN into the intersubunit pockets in the alpha-rings, triggers opening of the gate for substrate entry. Interconversion between the open-gate and close-gate conformations leads to a dynamic regulation of the 20S proteasome proteolysis activity. In terms of biological role, component of the proteasome core, a large protease complex with broad specificity involved in protein degradation. The protein is Proteasome subunit beta of Methanobrevibacter ruminantium (strain ATCC 35063 / DSM 1093 / JCM 13430 / OCM 146 / M1) (Methanobacterium ruminantium).